A 321-amino-acid chain; its full sequence is Glucokinase (321 aa).

Residue alanine 8 to threonine 13 coordinates ATP.

The protein belongs to the bacterial glucokinase family.

It localises to the cytoplasm. The catalysed reaction is D-glucose + ATP = D-glucose 6-phosphate + ADP + H(+). The sequence is that of Glucokinase from Photorhabdus laumondii subsp. laumondii (strain DSM 15139 / CIP 105565 / TT01) (Photorhabdus luminescens subsp. laumondii).